Here is a 677-residue protein sequence, read N- to C-terminus: MAAGGGGSCDPLAPAGVPCAFSPHSQAYFALASTDGHLRVWETANNRLHQEYVPSAHLSGTCTCLAWAPARLQAKESPQRKKRKSEAVGMSNQTDLLALGTAVGSILLYSTVKGELHSKLISGGHDNRVNCIQWHQDSGCLYSCSDDKHIVEWNVQTCKVKCKWKGDNSSVSSLCISPDGKMLLSAGRTIKLWVLETKEVYRHFTGHATPVSSLMFTTIRPPNESQPFDGITGLYFLSGAVHDRLLNVWQVRSENKEKSAVMSFTVTDEPVYIDLTLSENKEEPVKLAVVCRDGQVHLFEHILNGYCKKPLTSNCTIQIATPGKGKKSTPKPIPILAAGFCSDKMSLLLVYGSWFQPTIERVALNSREPHMCLVRDISNCWAPKVETAITKVRTPVMNSEAKVLVPGIPGHHAAIKPAPPQTEQVESKRKSGGNEVSIEERLGAMDIDTHKKGKEDLQTNSFPVLLTQGLESNDFEMLNKVLQTRNVNLIKKTVLRMPLHTIIPLLQELTKRLQGHPNSAVLMVQWLKCVLTVHASYLSTLPDLVPQLGTLYQLMESRVKTFQKLSHLHGKLILLITQVTASEKTKGATSPGQKAKLVYEEESSEEESDDEIADKDSEDNWDEDEEESESEKDEDVEEEDEDAEGKDEENGEDRDTASEKELNGDSDLDPENESEEE.

WD repeat units follow at residues 11 to 51 (PLAP…LHQE), 57 to 119 (HLSG…LHSK), 124 to 163 (GHDN…VKCK), 166 to 205 (GDNS…RHFT), 207 to 259 (HATP…KEKS), and 267 to 309 (TDEP…YCKK). The residue at position 77 (serine 77) is a Phosphoserine. Lysine 309 is covalently cross-linked (Glycyl lysine isopeptide (Lys-Gly) (interchain with G-Cter in SUMO1); alternate). Lysine 309 is covalently cross-linked (Glycyl lysine isopeptide (Lys-Gly) (interchain with G-Cter in SUMO2); alternate). Threonine 321 bears the Phosphothreonine mark. A Glycyl lysine isopeptide (Lys-Gly) (interchain with G-Cter in SUMO1); alternate cross-link involves residue lysine 384. A Glycyl lysine isopeptide (Lys-Gly) (interchain with G-Cter in SUMO2); alternate cross-link involves residue lysine 384. Phosphothreonine is present on threonine 394. Residues serine 399, serine 431, serine 437, and serine 590 each carry the phosphoserine modification. Disordered stretches follow at residues 414–445 (AIKP…LGAM) and 582–677 (SEKT…SEEE). The segment covering 582-592 (SEKTKGATSPG) has biased composition (polar residues). Positions 600 to 652 (EEESSEEESDDEIADKDSEDNWDEDEEESESEKDEDVEEEDEDAEGKDEENGE) are enriched in acidic residues. Positions 653–663 (DRDTASEKELN) are enriched in basic and acidic residues. A Phosphothreonine modification is found at threonine 656. A Phosphoserine modification is found at serine 658. Residues 664–677 (GDSDLDPENESEEE) are compositionally biased toward acidic residues.

It belongs to the UTP5 family. In terms of assembly, part of the small subunit (SSU) processome, composed of more than 70 proteins and the RNA chaperone small nucleolar RNA (snoRNA) U3. May be a component of the proposed t-UTP subcomplex of the ribosomal small subunit (SSU) processome containing at least UTP4, WDR43, HEATR1, UTP15, WDR75. Binds to RNA; binding is required for its chromatin association. Interacts with CDK9, DDX21 and SUPT6H. Interacts with RNA polymerase II. Interacts directly with UTP4 and UTP15.

It localises to the nucleus. It is found in the nucleolus. Its subcellular location is the nucleolus fibrillar center. The protein localises to the nucleoplasm. In terms of biological role, ribosome biogenesis factor that coordinates hyperactive transcription and ribogenesis. Part of the small subunit (SSU) processome, first precursor of the small eukaryotic ribosomal subunit. During the assembly of the SSU processome in the nucleolus, many ribosome biogenesis factors, an RNA chaperone and ribosomal proteins associate with the nascent pre-rRNA and work in concert to generate RNA folding, modifications, rearrangements and cleavage as well as targeted degradation of pre-ribosomal RNA by the RNA exosome. Involved in nucleolar processing of pre-18S ribosomal RNA. Required for optimal pre-ribosomal RNA transcription by RNA polymerase I. Essential for stem cell pluripotency and embryonic development. In the nucleoplasm, recruited by promoter-associated/nascent transcripts and transcription to active promoters where it facilitates releases of elongation factor P-TEFb and paused RNA polymerase II to allow transcription elongation and maintain high-level expression of its targets genes. This is WD repeat-containing protein 43 from Homo sapiens (Human).